The sequence spans 258 residues: uncharacterized protein (258 aa).

The N-terminal stretch at 1-20 is a signal peptide; it reads MKCFQKLYIFILILIVLMAG. C21 is lipidated: N-palmitoyl cysteine. The S-diacylglycerol cysteine moiety is linked to residue C21.

The protein belongs to the staphylococcal tandem lipoprotein family.

It is found in the cell membrane. This is an uncharacterized protein from Staphylococcus aureus (strain bovine RF122 / ET3-1).